The sequence spans 187 residues: Large ribosomal subunit protein eL18x (187 aa).

Residues 150-187 (HFGPAPGVPHSNTKPYVRHKGRKFEKARGKRKSRGFKV) form a disordered region. Basic residues predominate over residues 165–187 (YVRHKGRKFEKARGKRKSRGFKV).

It belongs to the eukaryotic ribosomal protein eL18 family.

This chain is Large ribosomal subunit protein eL18x (RPL18C), found in Arabidopsis thaliana (Mouse-ear cress).